The following is a 387-amino-acid chain: Probable 1-alkyl-2-acetylglycerophosphocholine esterase (387 aa).

An N-terminal signal peptide occupies residues 1–17 (MLVQGTIICALVANAIA). Asn-51 and Asn-141 each carry an N-linked (GlcNAc...) asparagine glycan. Ser-227 (nucleophile) is an active-site residue. Asp-250 serves as the catalytic Charge relay system. A glycan (N-linked (GlcNAc...) asparagine) is linked at Asn-283. Catalysis depends on His-313, which acts as the Charge relay system.

The protein belongs to the AB hydrolase superfamily. Lipase family.

Its subcellular location is the secreted. It carries out the reaction a 1-O-alkyl-2-acetyl-sn-glycero-3-phosphocholine + H2O = a 1-O-alkyl-sn-glycero-3-phosphocholine + acetate + H(+). The chain is Probable 1-alkyl-2-acetylglycerophosphocholine esterase from Arthroderma benhamiae (strain ATCC MYA-4681 / CBS 112371) (Trichophyton mentagrophytes).